We begin with the raw amino-acid sequence, 432 residues long: Amino-acid acetyltransferase (432 aa).

An N-acetyltransferase domain is found at 286 to 425; that stretch reads ELVREAAIED…ASLYNYQRNS (140 aa).

The protein belongs to the acetyltransferase family. ArgA subfamily.

It is found in the cytoplasm. The catalysed reaction is L-glutamate + acetyl-CoA = N-acetyl-L-glutamate + CoA + H(+). It participates in amino-acid biosynthesis; L-arginine biosynthesis; N(2)-acetyl-L-ornithine from L-glutamate: step 1/4. The protein is Amino-acid acetyltransferase of Pseudomonas fluorescens (strain Pf0-1).